We begin with the raw amino-acid sequence, 781 residues long: Catenin beta-1 (781 aa).

The interval 34–56 (GIHSGATTTAPSLSGKGNPEDED) is disordered. ARM repeat units follow at residues 141 to 180 (NYQDDAELATRAIPELTKLLNDEDQVVVNKAAVMVHQLSK), 225 to 264 (REGLLAIFKSGGIPALVKMLGSPVDSVLFYAITTLHNLLL), 267 to 306 (EGAKMAVRLAGGLQKMVALLNKTNVKFLAITTDCLQILAY), 351 to 390 (SSNKPAIVEAGGMQALGLHLTDSSQRLVQNCLWTLRNLSD), 391 to 429 (AATKQEGMEGLLGTLVQLLGSDDINVVTCAAGILSNLTC), 432 to 473 (YKNK…HLTS), 479 to 519 (EMAQ…NLAL), 521 to 562 (PANH…QFVE), 584 to 623 (IHNRIVIRGLNTIPLFVQLLYSPIENIQRVAAGVLCDVAQ), and 625 to 664 (KEAAEAIEAEGATAPLTELLHSRNEGVATYAAAVLFRMSE). The segment covering 735-745 (MDHDMGGHHPG) has biased composition (basic and acidic residues). The interval 735–781 (MDHDMGGHHPGADYPVDGLPDLSHAQDLMDGLPPGDSNQLAWFDTDL) is disordered.

This sequence belongs to the beta-catenin family. In terms of assembly, interacts with EP-Cadherin/CDH3. Interacts with custos; the interaction is positively regulated by Wnt stimulation. Post-translationally, phosphorylation by gsk3b promotes ubiquitination and subsequent degradation by the proteasome. In terms of processing, ubiquitinated when phosphorylated by gsk3b, leading to its degradation. In terms of tissue distribution, expressed at intercalated disks in the heart (at protein level).

It is found in the cytoplasm. The protein resides in the nucleus. It localises to the cell membrane. In terms of biological role, key downstream component of the canonical Wnt signaling pathway. In the absence of Wnt, forms a complex with axin1, axin2, apc, csnk1a1 and gsk3b that promotes phosphorylation on N-terminal Ser and Thr residues and ubiquitination of ctnnb1 and its subsequent degradation by the proteasome. In the presence of Wnt ligand, ctnnb1 is not ubiquitinated and accumulates in the nucleus, where it acts as a coactivator for transcription factors of the TCF/LEF family, leading to activate Wnt responsive genes. Plays a key role in dorsoventral patterning: in prospective ventral blastomeres, its down-regulation by axin1 and axin2 leads to inhibit the Wnt signaling pathway, while in prospective dorsal blastomeres, degradation of axin results in stabilization and nuclear translocation of ctnnb1. The polypeptide is Catenin beta-1 (Xenopus laevis (African clawed frog)).